Here is a 418-residue protein sequence, read N- to C-terminus: Cell division protein FtsZ (418 aa).

GTP-binding positions include 27–31, 114–116, Glu-145, Lys-149, and Asp-193; these read GGGSN and GTG. Residues 386–418 are disordered; it reads KNGVKGHTFGVPLPSVNEDLDEPTFLRNRNKGL.

The protein belongs to the FtsZ family. In terms of assembly, homodimer. Polymerizes to form a dynamic ring structure in a strictly GTP-dependent manner. Interacts directly with several other division proteins.

It localises to the cytoplasm. In terms of biological role, essential cell division protein that forms a contractile ring structure (Z ring) at the future cell division site. The regulation of the ring assembly controls the timing and the location of cell division. One of the functions of the FtsZ ring is to recruit other cell division proteins to the septum to produce a new cell wall between the dividing cells. Binds GTP and shows GTPase activity. The sequence is that of Cell division protein FtsZ from Treponema pallidum (strain Nichols).